Consider the following 588-residue polypeptide: Aspartate--tRNA ligase (588 aa).

Residue Glu177 participates in L-aspartate binding. The interval 201–204 (QIFK) is aspartate. An L-aspartate-binding site is contributed by Arg223. ATP-binding positions include 223 to 225 (RDE) and Gln232. His451 serves as a coordination point for L-aspartate. An ATP-binding site is contributed by Glu485. Arg492 contacts L-aspartate. 537–540 (GLDR) contacts ATP.

It belongs to the class-II aminoacyl-tRNA synthetase family. Type 1 subfamily. Homodimer.

Its subcellular location is the cytoplasm. The catalysed reaction is tRNA(Asp) + L-aspartate + ATP = L-aspartyl-tRNA(Asp) + AMP + diphosphate. Its function is as follows. Catalyzes the attachment of L-aspartate to tRNA(Asp) in a two-step reaction: L-aspartate is first activated by ATP to form Asp-AMP and then transferred to the acceptor end of tRNA(Asp). This is Aspartate--tRNA ligase from Staphylococcus saprophyticus subsp. saprophyticus (strain ATCC 15305 / DSM 20229 / NCIMB 8711 / NCTC 7292 / S-41).